Here is a 107-residue protein sequence, read N- to C-terminus: UPF0122 protein STH1464 (107 aa).

Belongs to the UPF0122 family.

Might take part in the signal recognition particle (SRP) pathway. This is inferred from the conservation of its genetic proximity to ftsY/ffh. May be a regulatory protein. This is UPF0122 protein STH1464 from Symbiobacterium thermophilum (strain DSM 24528 / JCM 14929 / IAM 14863 / T).